The following is a 333-amino-acid chain: Glycerol-3-phosphate dehydrogenase [NAD(P)+] (333 aa).

Ser10, Trp11, His31, Arg32, and Lys105 together coordinate NADPH. Positions 105, 136, and 138 each coordinate sn-glycerol 3-phosphate. Ala140 serves as a coordination point for NADPH. Residues Lys191, Asp244, Ser254, Arg255, and Asn256 each contribute to the sn-glycerol 3-phosphate site. Lys191 functions as the Proton acceptor in the catalytic mechanism. Arg255 serves as a coordination point for NADPH. NADPH contacts are provided by Ile279 and Glu281.

The protein belongs to the NAD-dependent glycerol-3-phosphate dehydrogenase family.

Its subcellular location is the cytoplasm. The enzyme catalyses sn-glycerol 3-phosphate + NAD(+) = dihydroxyacetone phosphate + NADH + H(+). It carries out the reaction sn-glycerol 3-phosphate + NADP(+) = dihydroxyacetone phosphate + NADPH + H(+). It participates in membrane lipid metabolism; glycerophospholipid metabolism. In terms of biological role, catalyzes the reduction of the glycolytic intermediate dihydroxyacetone phosphate (DHAP) to sn-glycerol 3-phosphate (G3P), the key precursor for phospholipid synthesis. This chain is Glycerol-3-phosphate dehydrogenase [NAD(P)+], found in Chlorobium chlorochromatii (strain CaD3).